The sequence spans 339 residues: Aspartate carbamoyltransferase catalytic subunit (339 aa).

Carbamoyl phosphate is bound by residues Arg60 and Thr61. Lys88 contacts L-aspartate. Positions 110, 143, and 146 each coordinate carbamoyl phosphate. 2 residues coordinate L-aspartate: Arg183 and Arg254. The carbamoyl phosphate site is built by Gly295 and Pro296.

This sequence belongs to the aspartate/ornithine carbamoyltransferase superfamily. ATCase family. As to quaternary structure, heterododecamer (2C3:3R2) of six catalytic PyrB chains organized as two trimers (C3), and six regulatory PyrI chains organized as three dimers (R2).

The catalysed reaction is carbamoyl phosphate + L-aspartate = N-carbamoyl-L-aspartate + phosphate + H(+). It participates in pyrimidine metabolism; UMP biosynthesis via de novo pathway; (S)-dihydroorotate from bicarbonate: step 2/3. In terms of biological role, catalyzes the condensation of carbamoyl phosphate and aspartate to form carbamoyl aspartate and inorganic phosphate, the committed step in the de novo pyrimidine nucleotide biosynthesis pathway. The sequence is that of Aspartate carbamoyltransferase catalytic subunit from Prochlorococcus marinus (strain MIT 9312).